The chain runs to 177 residues: Phycoerythrin beta subunit (177 aa).

(2R,3E)-phycocyanobilin-binding residues include Tyr-18, Lys-28, Asn-35, and Asp-39. 15,16-dihydrobiliverdin is bound by residues Cys-50, Asp-54, and Cys-61. Positions 77, 82, 84, and 85 each coordinate (2R,3E)-phycocyanobilin. Residues Arg-129, Gln-148, and Lys-149 each coordinate 15,16-dihydrobiliverdin. Pro-154, Gly-156, and Cys-158 together coordinate (2R,3E)-phycocyanobilin.

This sequence belongs to the phycobiliprotein family. Heterotetramer of 2 identical alpha chains and 2 identical beta chains which form 2 alpha-beta heterodimers within the heterotetramer. The two alpha-beta heterodimers are rotated to an open configuration in contrast to the closed configuration found in other cryptophyte species due to the insertion of a single amino acid, 'Asp-65', in a conserved region of the alpha chain. In the open form, the central chromophores are not in physical contact but are separated by a water-filled channel. In terms of processing, contains three phycocyanobilin chromophores and one 15,16-dihydrobiliverdin chromophore with binding of the phycocyanobilin chromophores mediated by both the alpha and beta subunits.

It localises to the plastid. It is found in the chloroplast thylakoid membrane. In terms of biological role, light-harvesting photosynthetic bile pigment-protein from the phycobiliprotein complex. This chain is Phycoerythrin beta subunit, found in Hemiselmis virescens.